The chain runs to 314 residues: tRNA dimethylallyltransferase (314 aa).

13–20 (GPTAIGKT) contacts ATP. 15-20 (TAIGKT) serves as a coordination point for substrate. The segment at 38–41 (DSMQ) is interaction with substrate tRNA.

It belongs to the IPP transferase family. Monomer. Mg(2+) is required as a cofactor.

It carries out the reaction adenosine(37) in tRNA + dimethylallyl diphosphate = N(6)-dimethylallyladenosine(37) in tRNA + diphosphate. Its function is as follows. Catalyzes the transfer of a dimethylallyl group onto the adenine at position 37 in tRNAs that read codons beginning with uridine, leading to the formation of N6-(dimethylallyl)adenosine (i(6)A). This is tRNA dimethylallyltransferase from Desulfotalea psychrophila (strain LSv54 / DSM 12343).